A 352-amino-acid polypeptide reads, in one-letter code: Molybdenum import ATP-binding protein ModC (352 aa).

The region spanning 1–229 is the ABC transporter domain; that stretch reads MLQLDFHQQL…SALRPWLPKD (229 aa). 31-38 contributes to the ATP binding site; it reads GVSGAGKT. The 64-residue stretch at 289 to 352 folds into the Mop domain; it reads KSSIRNVLRA…AQIKSVSITA (64 aa).

Belongs to the ABC transporter superfamily. Molybdate importer (TC 3.A.1.8) family. In terms of assembly, the complex is composed of two ATP-binding proteins (ModC), two transmembrane proteins (ModB) and a solute-binding protein (ModA).

Its subcellular location is the cell inner membrane. It carries out the reaction molybdate(out) + ATP + H2O = molybdate(in) + ADP + phosphate + H(+). In terms of biological role, part of the ABC transporter complex ModABC involved in molybdenum import. Responsible for energy coupling to the transport system. The polypeptide is Molybdenum import ATP-binding protein ModC (Pectobacterium atrosepticum (strain SCRI 1043 / ATCC BAA-672) (Erwinia carotovora subsp. atroseptica)).